The primary structure comprises 3413 residues: Protein pecanex (3413 aa).

A run of 2 helical transmembrane segments spans residues 33–53 (VVHL…YLYF) and 57–77 (WLTW…VKLA). Asparagine 164 is a glycosylation site (N-linked (GlcNAc...) asparagine). The segment covering 182 to 195 (GSQQDQQSLAGSAS) has biased composition (low complexity). Disordered stretches follow at residues 182 to 213 (GSQQ…STSA) and 235 to 314 (GSSA…ENKL). The segment covering 196–213 (VSKSIRSTGPGGNSSTSA) has biased composition (polar residues). N-linked (GlcNAc...) asparagine glycosylation is present at asparagine 208. Over residues 302–312 (AAAAANSNAEN) the composition is skewed to low complexity. An N-linked (GlcNAc...) asparagine glycan is attached at asparagine 317. 4 disordered regions span residues 327–363 (PSFL…GDAP), 379–403 (LVNP…RLKH), 540–609 (PGTG…GTGG), and 625–651 (PSVS…NPLP). Positions 330–354 (LHSQPTNKARGQTNPRQHFITSAPS) are enriched in polar residues. Residues 392-402 (RSSETHDERLK) show a composition bias toward basic and acidic residues. Residues 541–559 (GTGGSVTGGGGAAGGGGSA) are compositionally biased toward gly residues. 2 N-linked (GlcNAc...) asparagine glycosylation sites follow: asparagine 569 and asparagine 581. The segment covering 569–582 (NATSYKHGSSQSNK) has biased composition (polar residues). The segment covering 599-609 (GTSGGAGGTGG) has biased composition (gly residues). The span at 625-634 (PSVSNLSPHP) shows a compositional bias: polar residues. N-linked (GlcNAc...) asparagine glycosylation occurs at asparagine 685. Residues 720–730 (EKTAHEEHGDD) are compositionally biased toward basic and acidic residues. Disordered stretches follow at residues 720 to 745 (EKTA…DDEV), 816 to 873 (HHHS…NRQP), 886 to 921 (RQEL…DCEQ), and 1002 to 1021 (KQTK…HSIS). The segment covering 816 to 826 (HHHSHLHHHKA) has biased composition (basic residues). The span at 828 to 846 (SVEGAGPSGGSVAVGVSAG) shows a compositional bias: low complexity. The segment covering 847–856 (NDDEDEETED) has biased composition (acidic residues). An N-linked (GlcNAc...) asparagine glycan is attached at asparagine 857. Positions 1008 to 1021 (SRNSSSSNSTHSIS) are enriched in low complexity. Residues asparagine 1010, asparagine 1015, asparagine 1069, and asparagine 1199 are each glycosylated (N-linked (GlcNAc...) asparagine). The next 2 helical transmembrane spans lie at 1315-1335 (MHVL…AAIL) and 1343-1363 (LCAL…VKSV). Residue asparagine 1375 is glycosylated (N-linked (GlcNAc...) asparagine). Transmembrane regions (helical) follow at residues 1376–1396 (KTVA…LLLL), 1423–1443 (VVAL…IIFS), 1474–1494 (LLGS…LYGP), and 1504–1524 (GTQY…GYHL). Asparagine 1572 carries an N-linked (GlcNAc...) asparagine glycan. 3 disordered regions span residues 1577–1675 (QLTT…TGEP), 1722–1744 (DKIS…GAGT), and 1760–1813 (AEAE…LPDP). Composition is skewed to basic and acidic residues over residues 1587–1598 (RQTDVKTEHEQI) and 1607–1620 (TVNE…HGAD). Over residues 1639–1666 (KTSSLGSSQQTLGKTISSSKRAITASSS) the composition is skewed to low complexity. Residues 1725-1738 (SSSSATNPGDMSTL) show a composition bias toward polar residues. A run of 5 repeats spans residues 1776–1777 (GT), 1778–1779 (GT), 1780–1781 (GT), 1782–1783 (GT), and 1784–1785 (GT). The segment at 1776 to 1785 (GTGTGTGTGT) is 5 X 2 AA tandem repeats of G-T. Residues asparagine 1791 and asparagine 1804 are each glycosylated (N-linked (GlcNAc...) asparagine). Residues 1799–1808 (GNTNSNGTGN) show a composition bias toward low complexity. A run of 5 helical transmembrane segments spans residues 1830-1850 (LVVM…TVFT), 1856-1876 (LNVV…YIVP), 1914-1934 (LYIY…AISS), 1940-1960 (QLIV…ICAL), and 1976-1996 (IIIF…ETFI). A disordered region spans residues 2344-2463 (SMGGAPPAQA…HSFANISRQT (120 aa)). The segment covering 2346–2370 (GGAPPAQAPAAAGGASSAPATAGVA) has biased composition (low complexity). N-linked (GlcNAc...) asparagine glycosylation is found at asparagine 2380 and asparagine 2387. Over residues 2389-2411 (SAHGGQAGPSSGQSKSQSQQQLR) the composition is skewed to low complexity. Residues 2437–2447 (GTGGVTGGGGD) are compositionally biased toward gly residues. Positions 2449–2463 (QLSSSHSFANISRQT) are enriched in polar residues. 3 N-linked (GlcNAc...) asparagine glycosylation sites follow: asparagine 2458, asparagine 2619, and asparagine 2717. 2 disordered regions span residues 2908 to 2997 (LNRE…SSGS) and 3198 to 3242 (ESST…GDDG). Residues 2940 to 2956 (RRPEVGSSRGRDHERRA) show a composition bias toward basic and acidic residues. Asparagine 3246 carries an N-linked (GlcNAc...) asparagine glycan. The segment at 3295-3413 (AEESKEKGTA…NGESEAGTTV (119 aa)) is disordered. A compositionally biased stretch (acidic residues) spans 3310–3323 (EGEEGVGEMEIEPE). Residues 3364-3377 (TSSTSSAKSTSSPS) show a composition bias toward low complexity. Residues 3380–3406 (QEEEDAVDPEETPELASEESPSDENGE) are compositionally biased toward acidic residues.

The protein belongs to the pecanex family.

The protein resides in the membrane. In terms of biological role, involved in neurogenesis. This is Protein pecanex (pcx) from Drosophila melanogaster (Fruit fly).